Reading from the N-terminus, the 337-residue chain is Glyceraldehyde-3-phosphate dehydrogenase (337 aa).

NAD(+) is bound by residues 17-18 (RI), Asp-39, Lys-83, and Ser-125. Residues 156–158 (SCT), Thr-187, Arg-202, 215–216 (TG), and Arg-238 contribute to the D-glyceraldehyde 3-phosphate site. Cys-157 serves as the catalytic Nucleophile. Residue Asn-319 participates in NAD(+) binding.

Belongs to the glyceraldehyde-3-phosphate dehydrogenase family. In terms of assembly, homotetramer.

The protein resides in the cytoplasm. It carries out the reaction D-glyceraldehyde 3-phosphate + phosphate + NAD(+) = (2R)-3-phospho-glyceroyl phosphate + NADH + H(+). The protein operates within carbohydrate degradation; glycolysis; pyruvate from D-glyceraldehyde 3-phosphate: step 1/5. Functionally, catalyzes the oxidative phosphorylation of glyceraldehyde 3-phosphate (G3P) to 1,3-bisphosphoglycerate (BPG) using the cofactor NAD. The first reaction step involves the formation of a hemiacetal intermediate between G3P and a cysteine residue, and this hemiacetal intermediate is then oxidized to a thioester, with concomitant reduction of NAD to NADH. The reduced NADH is then exchanged with the second NAD, and the thioester is attacked by a nucleophilic inorganic phosphate to produce BPG. This chain is Glyceraldehyde-3-phosphate dehydrogenase (gapA), found in Mycoplasma genitalium (strain ATCC 33530 / DSM 19775 / NCTC 10195 / G37) (Mycoplasmoides genitalium).